Consider the following 139-residue polypeptide: MRITQGTFSFLPDLTDAQITSQLEYCLNQGWAVGIEYTDDPHPRNTYWEMFGLPMFDLRDAAGILLEINNARSTFPNHYIRVTAFDSTHTVESVVMSFIVNRPADEPGFRLVRQEEPGRTIRYSIESYAVQARPEGSRY.

This sequence belongs to the RuBisCO small chain family. In terms of assembly, heterohexadecamer of 8 large and 8 small subunits.

Functionally, ruBisCO catalyzes two reactions: the carboxylation of D-ribulose 1,5-bisphosphate, the primary event in carbon dioxide fixation, as well as the oxidative fragmentation of the pentose substrate. Both reactions occur simultaneously and in competition at the same active site. Although the small subunit is not catalytic it is essential for maximal activity. The chain is Ribulose bisphosphate carboxylase small subunit, plasmid from Cupriavidus necator (strain ATCC 17699 / DSM 428 / KCTC 22496 / NCIMB 10442 / H16 / Stanier 337) (Ralstonia eutropha).